Reading from the N-terminus, the 189-residue chain is Glycerol-3-phosphate acyltransferase 1 (189 aa).

5 consecutive transmembrane segments (helical) span residues 12–32, 61–81, 88–108, 124–144, and 164–184; these read MQFL…AYIV, GYFV…VSIA, FTFV…PMLF, IAFD…FYLI, and ILYS…VLIL.

It belongs to the PlsY family. In terms of assembly, probably interacts with PlsX.

Its subcellular location is the cell membrane. It catalyses the reaction an acyl phosphate + sn-glycerol 3-phosphate = a 1-acyl-sn-glycero-3-phosphate + phosphate. Its pathway is lipid metabolism; phospholipid metabolism. Catalyzes the transfer of an acyl group from acyl-phosphate (acyl-PO(4)) to glycerol-3-phosphate (G3P) to form lysophosphatidic acid (LPA). This enzyme utilizes acyl-phosphate as fatty acyl donor, but not acyl-CoA or acyl-ACP. The protein is Glycerol-3-phosphate acyltransferase 1 of Bacillus anthracis.